We begin with the raw amino-acid sequence, 317 residues long: tRNA(Met) cytidine acetate ligase (317 aa).

ATP-binding positions include 6–19, glycine 100, asparagine 157, and arginine 182; that span reads IAEY…HIYQ.

Belongs to the TmcAL family.

It is found in the cytoplasm. It catalyses the reaction cytidine(34) in elongator tRNA(Met) + acetate + ATP = N(4)-acetylcytidine(34) in elongator tRNA(Met) + AMP + diphosphate. Its function is as follows. Catalyzes the formation of N(4)-acetylcytidine (ac(4)C) at the wobble position of elongator tRNA(Met), using acetate and ATP as substrates. First activates an acetate ion to form acetyladenylate (Ac-AMP) and then transfers the acetyl group to tRNA to form ac(4)C34. The chain is tRNA(Met) cytidine acetate ligase from Mesomycoplasma hyopneumoniae (strain J / ATCC 25934 / NCTC 10110) (Mycoplasma hyopneumoniae).